A 200-amino-acid polypeptide reads, in one-letter code: Systemin (200 aa).

The tract at residues methionine 1 to glutamate 33 is disordered. 2 consecutive propeptides follow at residues methionine 1–leucine 178 and asparagine 197–leucine 200. One copy of the 1; truncated repeat lies at threonine 3–isoleucine 8. A compositionally biased stretch (basic and acidic residues) spans isoleucine 8–glutamate 33. Tandem repeats lie at residues glutamate 37 to isoleucine 45, glutamate 80 to isoleucine 88, glutamate 117 to isoleucine 125, and aspartate 145 to isoleucine 153. Disordered stretches follow at residues glutamate 106–glutamate 159 and leucine 178–leucine 200. Basic and acidic residues-rich tracts occupy residues glutamate 111–histidine 140 and lysine 146–glycine 158.

As to expression, all organs except the roots. Transported out of wounds to distal tissues.

It is found in the cytoplasm. Its function is as follows. Activates a lipid-based signal transduction pathway in which linolenic acid is converted to jasmonic acid, a potent activator of defense gene transcription, including proteinase inhibitor. The sequence is that of Systemin from Solanum lycopersicum (Tomato).